A 148-amino-acid polypeptide reads, in one-letter code: MKMELKVKPIENGTVIDHISGSKALKVYKILNIEEKLPITLALNVPSKKGVMKDILKIEGLELTKDDVNKIALISPDATINIIKEGKVIKKFKVDLPKRIDGIIKCTNPNCITNKENIEGKFSIEQKNTLKIRCEYCEKFINSIIISK.

Positions 106, 111, 134, and 137 each coordinate Zn(2+).

Belongs to the PyrI family. As to quaternary structure, contains catalytic and regulatory chains. Zn(2+) is required as a cofactor.

Functionally, involved in allosteric regulation of aspartate carbamoyltransferase. This Methanococcus maripaludis (strain C5 / ATCC BAA-1333) protein is Aspartate carbamoyltransferase regulatory chain.